Consider the following 393-residue polypeptide: 2,3,4,5-tetrahydropyridine-2,6-dicarboxylate N-succinyltransferase (393 aa).

The Acyl-anhydride intermediate role is filled by glutamate 261. Succinyl-CoA-binding positions include arginine 263, glycine 278, serine 281, alanine 304, 319 to 320, glycine 327, lysine 356, and 369 to 372; these read DA and RQDS.

This sequence belongs to the type 2 tetrahydrodipicolinate N-succinyltransferase family. In terms of assembly, homotrimer.

The protein localises to the cytoplasm. The catalysed reaction is (S)-2,3,4,5-tetrahydrodipicolinate + succinyl-CoA + H2O = (S)-2-succinylamino-6-oxoheptanedioate + CoA. The protein operates within amino-acid biosynthesis; L-lysine biosynthesis via DAP pathway; LL-2,6-diaminopimelate from (S)-tetrahydrodipicolinate (succinylase route): step 1/3. Its function is as follows. Catalyzes the conversion of the cyclic tetrahydrodipicolinate (THDP) into the acyclic N-succinyl-L-2-amino-6-oxopimelate using succinyl-CoA. The chain is 2,3,4,5-tetrahydropyridine-2,6-dicarboxylate N-succinyltransferase from Nitratiruptor sp. (strain SB155-2).